Here is a 461-residue protein sequence, read N- to C-terminus: MRVLIKNGIVVNADGQAKQDLLIESGIVRQLGTDISPQLPCEEIDASGCYVFPGGVDVHTHFNIDVGIARSCDDFFTGTRAAACGGTTTIIDHMGFGPNGCRLRHQLEVYRGYAAHKAVIDYSFHGVIQHINHAILDEIPMMVEEGLSSFKLYLTYQYKLNDDEVLQALRRLHESGALTTVHPENDAAIASKRAEFIAAGLTAPRYHALSRPLECEAEAIARMINLAQIAGNAPLYIVHLSNGLGLDYLRLARANHQPVWVETCPQYLLLDERSYDTEDGMKFILSPPLRNVREQDKLWCGISDGAIDVVATDHCTFSMAQRLQISKGDFSRCPNGLPGVENRMQLLFSSGVMTGRISLERFVELTSAMPARLFGLWPQKGILAPGSDGDVVIIDPRQSQQIQHRHLHDNADYSPWEGFTCQGAIVRTLSRGETIFCDGTFTGKAGRGRFLRRKPFVPPVL.

A divalent metal cation is bound by residues His-59, His-61, and Lys-151. Lys-151 is subject to N6-carboxylysine. Residue Tyr-156 participates in substrate binding. Residues His-182 and His-239 each coordinate a divalent metal cation. Residue Ser-286 participates in substrate binding. Asp-313 provides a ligand contact to a divalent metal cation. Position 335 (Asn-335) interacts with substrate.

The protein belongs to the metallo-dependent hydrolases superfamily. Hydantoinase/dihydropyrimidinase family. As to quaternary structure, homotetramer. A divalent metal cation is required as a cofactor. Carboxylation allows a single lysine to coordinate two divalent metal cations.

The enzyme catalyses D-5-phenylhydantoin + H2O = N-carbamoyl-D-phenylglycine + H(+). Functionally, catalyzes the stereospecific hydrolysis of the cyclic amide bond of D-hydantoin derivatives with an aromatic side chains at the 5'-position. Has no activity on dihydropyrimidines. The physiological function is unknown. The polypeptide is D-phenylhydantoinase (Escherichia coli (strain UTI89 / UPEC)).